Consider the following 1268-residue polypeptide: Vigilin (1268 aa).

N-acetylserine is present on Ser2. Thr8 is modified (phosphothreonine). Residues Ser11, Ser31, and Ser35 each carry the phosphoserine modification. KH domains are found at residues Gln150–Val212, Arg222–Ile284, Thr295–Val357, Phe364–Ile424, Met435–Leu497, Glu507–Met570, and Ser581–Ile643. Phosphothreonine is present on residues Thr295 and Thr296. A Phosphoserine modification is found at Ser317. The residue at position 437 (Tyr437) is a Phosphotyrosine. Ser645 bears the Phosphoserine mark. KH domains lie at Ile653–Leu716, Ser727–Leu790, Val800–Ile863, Gln873–Leu967, Pro972–Leu1034, Ser1052–Ile1117, and Met1127–Ile1190. The tract at residues Pro910–Arg946 is disordered. A compositionally biased stretch (basic and acidic residues) spans Gly932–Arg946. An N6-acetyllysine modification is found at Lys991. The segment at Pro1214 to Arg1268 is disordered. Over residues Trp1233 to Glu1249 the composition is skewed to polar residues. Residue Ser1247 is modified to Phosphoserine.

The protein localises to the cytoplasm. It is found in the nucleus. Appears to play a role in cell sterol metabolism. It may function to protect cells from over-accumulation of cholesterol. The polypeptide is Vigilin (Hdlbp) (Rattus norvegicus (Rat)).